Consider the following 402-residue polypeptide: Phosphoglycerate kinase (402 aa).

Residues 24-26 (DFN), Arg40, 63-66 (HFGR), Arg122, and Arg155 each bind substrate. Residues Lys206, Gly297, Glu328, and 357-360 (GGDS) each bind ATP.

This sequence belongs to the phosphoglycerate kinase family. As to quaternary structure, monomer.

The protein localises to the cytoplasm. It catalyses the reaction (2R)-3-phosphoglycerate + ATP = (2R)-3-phospho-glyceroyl phosphate + ADP. It functions in the pathway carbohydrate degradation; glycolysis; pyruvate from D-glyceraldehyde 3-phosphate: step 2/5. The sequence is that of Phosphoglycerate kinase from Prochlorococcus marinus (strain MIT 9211).